The primary structure comprises 127 residues: Lymphocyte antigen 6D (127 aa).

The N-terminal stretch at 1-20 (MKTALLVLLVLAVATSPAWA) is a signal peptide. Residues 21–108 (LRCHVCTNSA…AAPGHALLSS (88 aa)) form the UPAR/Ly6 domain. Disulfide bonds link Cys23-Cys45, Cys26-Cys32, Cys38-Cys63, Cys67-Cys86, and Cys87-Cys92. Residue Ser98 is the site of GPI-anchor amidated serine attachment. A propeptide spans 99–127 (AAPGHALLSSVTLGLATSLSLLTVMALCL) (removed in mature form).

Lymphoid cells lacking Ly6d, called ALP (all-lymphoid progenitor), retain full lymphoid potential and early thymic seeding activity, whereas cells containing Ly6d, called BLP (B-cell-biased lymphoid progenitor), up-regulate the B-cell specifying factors Ebf1 and Pax5 and behave essentially as B-cell progenitors (at protein level). Thymocytes and B-cells.

The protein localises to the cell membrane. In terms of biological role, may act as a specification marker at earliest stage specification of lymphocytes between B- and T-cell development. Marks the earliest stage of B-cell specification. The sequence is that of Lymphocyte antigen 6D (Ly6d) from Mus musculus (Mouse).